A 613-amino-acid polypeptide reads, in one-letter code: GPI mannosyltransferase 3 (613 aa).

The N-linked (GlcNAc...) asparagine glycan is linked to Asn19. 12 consecutive transmembrane segments (helical) span residues 22 to 42 (FFLRDIIVIRLINAWWIATFF), 83 to 103 (LFAGVYLVADFISSHILPVGI), 106 to 126 (ATILVAVPQALQAVIAGLGDW), 132 to 152 (AVSIYGANSNVSFFALFLQIF), 168 to 188 (LEMTLTVMAMYYWPWELLGVA), 216 to 236 (LAVVLRPTNILIWATIVLFTI), 252 to 272 (VVTLIREAIWCGSLILAISAA), 280 to 300 (FWTFPAYNFLYFNLSKSLAVF), 309 to 329 (YFLQGLPLICTTSLPFAVASL), 342 to 362 (FNVLKTLAYTVFTTVGALSLI), 369 to 389 (FIYPLLPALSILAAPYTASFF), and 411 to 431 (YLFVALGVNMFLAGYLSFFHQ).

It belongs to the glycosyltransferase 22 family. PIGB subfamily.

It is found in the endoplasmic reticulum membrane. Its pathway is glycolipid biosynthesis; glycosylphosphatidylinositol-anchor biosynthesis. Mannosyltransferase involved in glycosylphosphatidylinositol-anchor biosynthesis. Transfers the third mannose to Man2-GlcN-acyl-PI during GPI precursor assembly. In Gibberella zeae (strain ATCC MYA-4620 / CBS 123657 / FGSC 9075 / NRRL 31084 / PH-1) (Wheat head blight fungus), this protein is GPI mannosyltransferase 3 (GPI10).